The sequence spans 419 residues: Cyclin-B2-2 (419 aa).

The interval 79 to 116 is disordered; it reads QPSSAPLAPIGSERQKRTADSAFHGPADMECTKITSDD.

It belongs to the cyclin family. Cyclin AB subfamily. Interacts with CDKB2-1. Expressed in the intercalary meristem and the elongation zone of internodes. Expressed in adventitious roots at all nodes under submergence conditions.

It is found in the nucleus. Functionally, involved in the control of the cell cycle at the G2/M (mitosis) transition. May associate to CDKB2-1 and activate CDKB2-1 kinase to promote cell division. The sequence is that of Cyclin-B2-2 (CYCB2-2) from Oryza sativa subsp. indica (Rice).